The primary structure comprises 945 residues: Kinesin-like protein CIN8 (945 aa).

The 388-residue stretch at 22-409 (NITVAVRCRG…LEYAAKAKNI (388 aa)) folds into the Kinesin motor domain. 114–121 (GMTSTGKT) contributes to the ATP binding site. Positions 190–243 (IFDSSSMNHSSRASSQSNSPREPEVAHNGFSRRRQRPPPVKANRMSATKQQLSE) are disordered. Positions 193–208 (SSSMNHSSRASSQSNS) are enriched in low complexity. Positions 234–243 (MSATKQQLSE) are enriched in polar residues. Coiled coils occupy residues 450-562 (MSHE…DIKE) and 634-675 (LKEF…YLDQ).

This sequence belongs to the TRAFAC class myosin-kinesin ATPase superfamily. Kinesin family. BimC subfamily.

The protein localises to the cytoplasm. The protein resides in the cytoskeleton. It is found in the spindle. Elongates the mitotic spindle by interacting with spindle microtubules to generate an outward force pushing spindle poles apart. Following spindle assembly, CIN8 and KIP1 apparently act to oppose a force, possibly generated by KAR3, that draws separated poles back together. This Eremothecium gossypii (strain ATCC 10895 / CBS 109.51 / FGSC 9923 / NRRL Y-1056) (Yeast) protein is Kinesin-like protein CIN8 (CIN8).